Consider the following 235-residue polypeptide: Ribonuclease 3 (235 aa).

Residues 8–137 (PAELARRIGI…VIGAIFLSGG (130 aa)) enclose the RNase III domain. Glu50 is a Mg(2+) binding site. The active site involves Asp54. Asp123 and Glu126 together coordinate Mg(2+). The active site involves Glu126. Residues 163–232 (DNKTAFQEWV…AGRAMREWAG (70 aa)) form the DRBM domain. A disordered region spans residues 211–235 (QGRTKKEAEQQAAGRAMREWAGRKG). Positions 226-235 (AMREWAGRKG) are enriched in basic and acidic residues.

It belongs to the ribonuclease III family. Homodimer. The cofactor is Mg(2+).

It localises to the cytoplasm. It catalyses the reaction Endonucleolytic cleavage to 5'-phosphomonoester.. In terms of biological role, digests double-stranded RNA. Involved in the processing of primary rRNA transcript to yield the immediate precursors to the large and small rRNAs (23S and 16S). Processes some mRNAs, and tRNAs when they are encoded in the rRNA operon. Processes pre-crRNA and tracrRNA of type II CRISPR loci if present in the organism. The protein is Ribonuclease 3 of Heliobacterium modesticaldum (strain ATCC 51547 / Ice1).